We begin with the raw amino-acid sequence, 594 residues long: Protein FAM200C (594 aa).

In Homo sapiens (Human), this protein is Protein FAM200C.